The sequence spans 666 residues: Non-receptor tyrosine-protein kinase TNK1 (666 aa).

Phosphoserine occurs at positions 60 and 96. One can recognise a Protein kinase domain in the interval 116-377 (VCRGELLGSG…PSFSHLEGLL (262 aa)). ATP is bound by residues 122–130 (LGSGCFGVV) and Lys148. Asp245 functions as the Proton acceptor in the catalytic mechanism. 2 positions are modified to phosphoserine: Ser255 and Ser411. The SH3 domain maps to 380–445 (AGPSEACCVR…PASAVTLADA (66 aa)). Residues 446–493 (GGLPATRPVHRGTPARGDQHPGSIDGDRKKANLWDAPPARGQRRNMPL) are disordered. Ser502 bears the Phosphoserine mark. Positions 506 to 579 (VLSLGPRPTG…MGMPGARKAA (74 aa)) are disordered. Thr514 carries the phosphothreonine modification. Ser519 is subject to Phosphoserine. Over residues 531-541 (QGPPGLPPRPP) the composition is skewed to pro residues. Residues 542 to 552 (LSSSSPQPSQP) are compositionally biased toward low complexity. Ser582 is subject to Phosphoserine.

This sequence belongs to the protein kinase superfamily. Tyr protein kinase family. In terms of assembly, interacts with the SH3 domain of PLCG1 via its Pro-rich domain. In terms of processing, autophosphorylated on tyrosine residues. As to expression, expressed in all umbilical cord blood, bone marrow and adult blood cell sub-populations and in several leukemia cell lines. Highly expressed in fetal blood, brain, lung, liver and kidney. Detected at lower levels in adult prostate, testis, ovary, small intestine and colon. Not expressed in adult lung, liver, kidney or brain.

The protein resides in the cytoplasm. It is found in the membrane. It carries out the reaction L-tyrosyl-[protein] + ATP = O-phospho-L-tyrosyl-[protein] + ADP + H(+). In terms of biological role, involved in negative regulation of cell growth. Has tumor suppressor properties. Plays a negative regulatory role in the Ras-MAPK pathway. May function in signaling pathways utilized broadly during fetal development and more selectively in adult tissues and in cells of the lymphohematopoietic system. Could specifically be involved in phospholipid signal transduction. The polypeptide is Non-receptor tyrosine-protein kinase TNK1 (Homo sapiens (Human)).